The primary structure comprises 269 residues: MAVGIFDSGLGGLTVLDAAQKRLPDVDFLYYGDNSHAPYGVRDAEDIYELTHKAVHDMWDRGCNLVILACNTASAAALRRMQEAGVPEGKRVLGVFVPLIEALTERQWGDNSPPREVAVKHVALFATPATVASRAFQRELAFRAIGVDVEAQACGGVVDAIEEGDMILAEALVKSHVDALLRKMPRPEAAILGCTHYPLMEDVFQKALGPDVQVFSQGRLVADSLAHYLERRPEMIGGGNAGYVTTGNANRVSSRATQFLRREITFEAA.

Substrate is bound by residues 7–8 (DS) and 39–40 (YG). The active-site Proton donor/acceptor is C70. 71–72 (NT) is a substrate binding site. Catalysis depends on C194, which acts as the Proton donor/acceptor. 195–196 (TH) contacts substrate.

The protein belongs to the aspartate/glutamate racemases family.

The enzyme catalyses L-glutamate = D-glutamate. It participates in cell wall biogenesis; peptidoglycan biosynthesis. In terms of biological role, provides the (R)-glutamate required for cell wall biosynthesis. This is Glutamate racemase from Ruegeria sp. (strain TM1040) (Silicibacter sp.).